Consider the following 238-residue polypeptide: 15,16-dihydrobiliverdin:ferredoxin oxidoreductase (238 aa).

This sequence belongs to the HY2 family.

It carries out the reaction 15,16-dihydrobiliverdin + oxidized 2[4Fe-4S]-[ferredoxin] = biliverdin IXalpha + reduced 2[4Fe-4S]-[ferredoxin] + 2 H(+). Functionally, catalyzes the two-electron reduction of biliverdin IX-alpha at the C15 methine bridge. The sequence is that of 15,16-dihydrobiliverdin:ferredoxin oxidoreductase from Prochlorococcus marinus (strain MIT 9211).